The following is a 190-amino-acid chain: Prostaglandin-H2 D-isomerase (190 aa).

The signal sequence occupies residues methionine 1–alanine 22. An N-linked (GlcNAc...) asparagine glycan is attached at asparagine 51. The Nucleophile role is filled by cysteine 65. Asparagine 78 carries an N-linked (GlcNAc...) asparagine glycan. Cysteine 89 and cysteine 186 are disulfide-bonded.

This sequence belongs to the calycin superfamily. Lipocalin family. Monomer.

It localises to the rough endoplasmic reticulum. The protein resides in the nucleus membrane. The protein localises to the golgi apparatus. Its subcellular location is the cytoplasm. It is found in the perinuclear region. It localises to the secreted. The enzyme catalyses prostaglandin H2 = prostaglandin D2. Functionally, catalyzes the conversion of PGH2 to PGD2, a prostaglandin involved in smooth muscle contraction/relaxation and a potent inhibitor of platelet aggregation. Involved in a variety of CNS functions, such as sedation, NREM sleep and PGE2-induced allodynia, and may have an anti-apoptotic role in oligodendrocytes. Binds small non-substrate lipophilic molecules, including biliverdin, bilirubin, retinal, retinoic acid and thyroid hormone, and may act as a scavenger for harmful hydrophobic molecules and as a secretory retinoid and thyroid hormone transporter. Possibly involved in development and maintenance of the blood-brain, blood-retina, blood-aqueous humor and blood-testis barrier. It is likely to play important roles in both maturation and maintenance of the central nervous system and male reproductive system. Involved in PLA2G3-dependent maturation of mast cells. PLA2G3 is secreted by immature mast cells and acts on nearby fibroblasts upstream to PTDGS to synthesize PGD2, which in turn promotes mast cell maturation and degranulation via PTGDR. This chain is Prostaglandin-H2 D-isomerase (PTGDS), found in Gorilla gorilla gorilla (Western lowland gorilla).